We begin with the raw amino-acid sequence, 315 residues long: D-alanine--D-alanine ligase B (315 aa).

The 201-residue stretch at 109-309 folds into the ATP-grasp domain; sequence KKVAAAAGVV…FAELLSWMVE (201 aa). Residue 135–190 coordinates ATP; sequence PMKPPYVVKPVREGSSFGVVIVKEDQPHPPQVIGSADWKYGDEVMVEGYIAGRELT. D259, E276, and N278 together coordinate Mg(2+).

Belongs to the D-alanine--D-alanine ligase family. The cofactor is Mg(2+). Mn(2+) serves as cofactor.

It is found in the cytoplasm. It catalyses the reaction 2 D-alanine + ATP = D-alanyl-D-alanine + ADP + phosphate + H(+). The protein operates within cell wall biogenesis; peptidoglycan biosynthesis. Functionally, cell wall formation. This Brucella melitensis biotype 1 (strain ATCC 23456 / CCUG 17765 / NCTC 10094 / 16M) protein is D-alanine--D-alanine ligase B.